Consider the following 282-residue polypeptide: tRNA pseudouridine synthase B (282 aa).

The active-site Nucleophile is the Asp36.

The protein belongs to the pseudouridine synthase TruB family. Type 1 subfamily.

It carries out the reaction uridine(55) in tRNA = pseudouridine(55) in tRNA. Functionally, responsible for synthesis of pseudouridine from uracil-55 in the psi GC loop of transfer RNAs. The protein is tRNA pseudouridine synthase B of Mycoplasmopsis pulmonis (strain UAB CTIP) (Mycoplasma pulmonis).